The sequence spans 621 residues: uncharacterized protein (621 aa).

3 helical membrane-spanning segments follow: residues 240–260 (FFDA…NLLW), 548–568 (LGIV…VWTV), and 587–607 (VIIG…LTFM).

It localises to the cell membrane. This is an uncharacterized protein from Mycoplasma pneumoniae (strain ATCC 29342 / M129 / Subtype 1) (Mycoplasmoides pneumoniae).